The sequence spans 259 residues: Probable transcriptional regulatory protein Noca_2383 (259 aa).

This sequence belongs to the TACO1 family.

It localises to the cytoplasm. This chain is Probable transcriptional regulatory protein Noca_2383, found in Nocardioides sp. (strain ATCC BAA-499 / JS614).